The following is a 1032-amino-acid chain: MIPEAFQPRAMKHTTTVLMLALSSRFWSVCADFPEVYGGESAGFGPVFEEQPLDTIYPEESPEEKITLTCRTRANPPASYRWRLNNAELVLAEGSDPHYSVSEGNLLISSPDKSKHAGNYTCVASNQYGSVTSRRARVQFGYLDMFSTDEREAVYVKEGQGAVLLCAPPPHFPEDLSFRWMLNEFPEFIPLDQRRFVSQSTGNLYISTVRSTDSGNYSCFVSSPAIAKSVFSKFIPLVPIAERSLRKYPADIKVKSPDSWALLGQNVTLECFALGNPIPQIRWRKLDGVLPPLRHDVSMSGALLHLYSLQYEDEGLYECEADNSKGKDWHKTHLYVEGAPDWLEQISSSEVDIGGDYIMSCQASGKPKPHVHFLKNGHMYMKGHEVRFSRLGFEDSGMYQCVAENRHGVIHANAELRVFASAPSFQYNPVKPKLLGARNGRVVFECRPRAAPRPNITWSKGTELLHNSSRISIWLDGSLELLNISKSDEGKYTCFAENDRGRANSTGSLSITDATKITLAPSNADVSVGEDARMECVASHDPGLDLTFIWSLDGHTINLQRDAQHYQRKMDSASGTSSSELLITHTQLRHAGRYSCTAQTPVDNTTASAELVVRGPPGPPGGVRVDEVTSDSVRVLWSHGTDNLSPISRYTVQLRESAAQQDWRDAATSPVNVEGNAEMATVVNLLPWTEYEFRVIATNTLGTGPPSEPSPKTTTREARPIVAPSDIGGGGGTSRELTITWTPVQSQYYYGSNFGYIIAFKPHNDPEWLRVTVTDPEAQKYVHKDPKIPPSTRFEVKMKAFNSQGEGPFSNSAFIYSAQDVPAEAPIITEARALSATEAIVIWVPVQLPTVERYQVRYWRESVENEASAQRVLVSSRENHTRLDNMKPDSHYLVEVRACNGAGYGPASQRNRIYTKKSPPSRPPKIISTKMHYSGTSINIAWEKVESLNNESTVAGYKVLYRQHGQPSGTLYTTEKQSIDLPMRRGEYLVEVRAHSEGGDGAVAQVRITGSAPAPALASALLLLPLLWTLML.

Residues 1 to 31 (MIPEAFQPRAMKHTTTVLMLALSSRFWSVCA) form the signal peptide. 6 consecutive Ig-like C2-type domains span residues 46 to 139 (PVFE…ARVQ), 144 to 231 (DMFS…KSVF), 249 to 335 (PADI…THLY), 340 to 417 (PDWL…AELR), 423 to 510 (PSFQ…GSLS), and 515 to 612 (TKIT…AELV). Disulfide bonds link cysteine 70–cysteine 122 and cysteine 166–cysteine 219. 3 N-linked (GlcNAc...) asparagine glycosylation sites follow: asparagine 119, asparagine 216, and asparagine 266. Cystine bridges form between cysteine 271–cysteine 319, cysteine 361–cysteine 401, and cysteine 446–cysteine 494. N-linked (GlcNAc...) asparagine glycosylation is found at asparagine 455, asparagine 467, asparagine 483, and asparagine 504. An intrachain disulfide couples cysteine 536 to cysteine 596. Asparagine 604 carries an N-linked (GlcNAc...) asparagine glycan. Fibronectin type-III domains are found at residues 619–718 (PPGG…TREA), 723–820 (APSD…SAQD), 825–918 (APII…TKKS), and 920–1015 (PSRP…APAP). Residues 699–729 (NTLGTGPPSEPSPKTTTREARPIVAPSDIGG) are disordered. A glycan (N-linked (GlcNAc...) asparagine) is linked at asparagine 879. A disordered region spans residues 907-926 (ASQRNRIYTKKSPPSRPPKI). An N-linked (GlcNAc...) asparagine glycan is attached at asparagine 950. The GPI-anchor amidated glycine moiety is linked to residue glycine 1010. The propeptide at 1011 to 1032 (SAPAPALASALLLLPLLWTLML) is removed in mature form.

This sequence belongs to the immunoglobulin superfamily. Contactin family. Expressed in brain.

It localises to the cell membrane. Its function is as follows. Mediates cell surface interactions during nervous system development. This is Contactin-1a (cntn1a) from Danio rerio (Zebrafish).